The sequence spans 865 residues: Alanine--tRNA ligase (865 aa).

Zn(2+) is bound by residues His-552, His-556, Cys-654, and His-658.

It belongs to the class-II aminoacyl-tRNA synthetase family. Zn(2+) is required as a cofactor.

It localises to the cytoplasm. It carries out the reaction tRNA(Ala) + L-alanine + ATP = L-alanyl-tRNA(Ala) + AMP + diphosphate. Its function is as follows. Catalyzes the attachment of alanine to tRNA(Ala) in a two-step reaction: alanine is first activated by ATP to form Ala-AMP and then transferred to the acceptor end of tRNA(Ala). Also edits incorrectly charged Ser-tRNA(Ala) and Gly-tRNA(Ala) via its editing domain. The chain is Alanine--tRNA ligase from Coxiella burnetii (strain RSA 331 / Henzerling II).